The primary structure comprises 828 residues: Periplasmic nitrate reductase (828 aa).

The segment at residues Met-1–Ala-31 is a signal peptide (tat-type signal). The region spanning Ile-39–Asp-95 is the 4Fe-4S Mo/W bis-MGD-type domain. Cys-46, Cys-49, Cys-53, and Cys-81 together coordinate [4Fe-4S] cluster. Mo-bis(molybdopterin guanine dinucleotide)-binding positions include Lys-83, Gln-150, Asn-175, Cys-179, Trp-212 to Met-219, Ser-243 to His-247, Gln-262 to Asp-264, Met-372, Gln-376, Asn-482, Ser-508 to Asp-509, Lys-531, Asp-558, and Thr-718 to Thr-727. Residue Phe-794 coordinates substrate. Mo-bis(molybdopterin guanine dinucleotide) contacts are provided by Asn-802 and Lys-819.

Belongs to the prokaryotic molybdopterin-containing oxidoreductase family. NasA/NapA/NarB subfamily. In terms of assembly, component of the periplasmic nitrate reductase NapAB complex composed of NapA and NapB. The cofactor is [4Fe-4S] cluster. It depends on Mo-bis(molybdopterin guanine dinucleotide) as a cofactor. Post-translationally, predicted to be exported by the Tat system. The position of the signal peptide cleavage has not been experimentally proven.

It localises to the periplasm. It catalyses the reaction 2 Fe(II)-[cytochrome] + nitrate + 2 H(+) = 2 Fe(III)-[cytochrome] + nitrite + H2O. Its function is as follows. Catalytic subunit of the periplasmic nitrate reductase complex NapAB. Receives electrons from NapB and catalyzes the reduction of nitrate to nitrite. The sequence is that of Periplasmic nitrate reductase from Salmonella paratyphi A (strain ATCC 9150 / SARB42).